The chain runs to 905 residues: DNA mismatch repair protein MutS (905 aa).

Positions 272–292 (KKPPLSPPSREATGSTMAIDP) are disordered. 654–661 (GPNMAGKS) is a binding site for ATP.

This sequence belongs to the DNA mismatch repair MutS family.

In terms of biological role, this protein is involved in the repair of mismatches in DNA. It is possible that it carries out the mismatch recognition step. This protein has a weak ATPase activity. In Rhodopseudomonas palustris (strain BisB18), this protein is DNA mismatch repair protein MutS.